Reading from the N-terminus, the 487-residue chain is Serine/threonine-protein kinase 4 (487 aa).

Met-1 is subject to N-acetylmethionine. The residue at position 3 (Thr-3) is a Phosphothreonine. The 252-residue stretch at 30–281 (FDVLEKLGEG…ATQLLQHPFV (252 aa)) folds into the Protein kinase domain. ATP contacts are provided by residues 36–44 (LGEGSYGSV) and Lys-59. Asp-149 serves as the catalytic Proton acceptor. Thr-183 is subject to Phosphothreonine; by autocatalysis. Ser-265 carries the post-translational modification Phosphoserine. Positions 290 to 310 (LRDLINEAMDVKLKRQEAQQR) form a coiled coil. Residues 305 to 337 (QEAQQREVDQDDEENSEEDELDSGTMVRAVGDE) are disordered. Residues 313–326 (DQDDEENSEEDELD) are compositionally biased toward acidic residues. Position 320 is a phosphoserine (Ser-320). Thr-340 and Thr-367 each carry phosphothreonine. The residue at position 387 (Thr-387) is a Phosphothreonine; by PKB/AKT1. Residues Ser-410 and Ser-414 each carry the phosphoserine modification. Tyr-433 carries the phosphotyrosine modification. Positions 433–480 (YEFLKSWTVEDLQKRLLALDPMMEQEIEEIRQKYQSKRQPILDAIEAK) constitute an SARAH domain.

The protein belongs to the protein kinase superfamily. STE Ser/Thr protein kinase family. STE20 subfamily. As to quaternary structure, homodimer; mediated via the coiled-coil region. Interacts with NORE1, which inhibits autoactivation. Interacts with and stabilizes SAV1. Interacts with RASSF1. Interacts with FOXO3. Interacts with RASSF2 (via SARAH domain). Interacts with AR, PKB/AKT1, TNNI3 and SIRT1. Interacts with DLG5 (via PDZ domain 3). Interacts with MARK3 and SCRIB in the presence of DLG5. Requires Mg(2+) as cofactor. In terms of processing, autophosphorylated on serine and threonine residues. Phosphorylation at Thr-387 by PKB/AKT1, leads to inhibition of its: kinase activity, nuclear translocation and autophosphorylation at Thr-183. It also diminishes its cleavage by caspases and its ability to phosphorylate FOXO3. Post-translationally, proteolytically cleaved by caspase-3 during apoptosis at Asp-326 and Asp-349 resulting in a 37 kDa or a 39 kDa subunit respectively. The 39 kDa subunit is further cleaved into the 37 kDa form. Proteolytic cleavage results in kinase activation and nuclear translocation of the truncated form (MST1/N). It is less likely that cleavage at Asp-349 is a prerequisite for activation as this site is not conserved in the murine ortholog.

The protein resides in the cytoplasm. It localises to the nucleus. The catalysed reaction is L-seryl-[protein] + ATP = O-phospho-L-seryl-[protein] + ADP + H(+). It carries out the reaction L-threonyl-[protein] + ATP = O-phospho-L-threonyl-[protein] + ADP + H(+). Inhibited by the C-terminal non-catalytic region. Activated by caspase-cleavage. Full activation also requires homodimerization and autophosphorylation of Thr-183. Activated by RASSF1 which acts by preventing its dephosphorylation. In terms of biological role, stress-activated, pro-apoptotic kinase which, following caspase-cleavage, enters the nucleus and induces chromatin condensation followed by internucleosomal DNA fragmentation. Key component of the Hippo signaling pathway which plays a pivotal role in organ size control and tumor suppression by restricting proliferation and promoting apoptosis. The core of this pathway is composed of a kinase cascade wherein STK3/MST2 and STK4/MST1, in complex with its regulatory protein SAV1, phosphorylates and activates LATS1/2 in complex with its regulatory protein MOB1, which in turn phosphorylates and inactivates YAP1 oncoprotein and WWTR1/TAZ. Phosphorylation of YAP1 by LATS2 inhibits its translocation into the nucleus to regulate cellular genes important for cell proliferation, cell death, and cell migration. STK3/MST2 and STK4/MST1 are required to repress proliferation of mature hepatocytes, to prevent activation of facultative adult liver stem cells (oval cells), and to inhibit tumor formation. Phosphorylates 'Ser-14' of histone H2B (H2BS14ph) during apoptosis. Phosphorylates FOXO3 upon oxidative stress, which results in its nuclear translocation and cell death initiation. Phosphorylates MOBKL1A, MOBKL1B and RASSF2. Phosphorylates TNNI3 (cardiac Tn-I) and alters its binding affinity to TNNC1 (cardiac Tn-C) and TNNT2 (cardiac Tn-T). Phosphorylates FOXO1 on 'Ser-212' and regulates its activation and stimulates transcription of PMAIP1 in a FOXO1-dependent manner. Phosphorylates SIRT1 and inhibits SIRT1-mediated p53/TP53 deacetylation, thereby promoting p53/TP53 dependent transcription and apoptosis upon DNA damage. Acts as an inhibitor of PKB/AKT1. Phosphorylates AR on 'Ser-650' and suppresses its activity by intersecting with PKB/AKT1 signaling and antagonizing formation of AR-chromatin complexes. The protein is Serine/threonine-protein kinase 4 (STK4) of Otolemur garnettii (Small-eared galago).